A 402-amino-acid polypeptide reads, in one-letter code: Multidrug resistance protein MdtH (402 aa).

At 1–12 (MSRVSQARNLGK) the chain is on the cytoplasmic side. A helical transmembrane segment spans residues 13 to 33 (YFLLIDNMLVVLGFFVVFPLI). At 34-98 (SIRFVDQMGW…GFATMGIAHE (65 aa)) the chain is on the periplasmic side. A helical transmembrane segment spans residues 99–116 (PWLLWFSCLLSGLGGTLF). At 117 to 138 (DPPRSALVVKLIRPQQRGRFFS) the chain is on the cytoplasmic side. The chain crosses the membrane as a helical span at residues 139-159 (LLMMQDSASAVIGALLGSWLL). Residues 160 to 164 (QYDFR) lie on the Periplasmic side of the membrane. A helical membrane pass occupies residues 165-185 (LVCATGPVLFVLCAAFNAWLL). Residues 186-213 (PAWKLSTVRTPVREGMTRVMRDKRFVTY) are Cytoplasmic-facing. The chain crosses the membrane as a helical span at residues 214–234 (VLTLAGYYMLAVQVMLMLPIM). Residues 235 to 243 (VNDVAGAPS) lie on the Periplasmic side of the membrane. The chain crosses the membrane as a helical span at residues 244–264 (AVKWMYAIEACLSLTLLYPIA). The Cytoplasmic segment spans residues 265–276 (RWSEKHFRLEHR). A helical transmembrane segment spans residues 277–297 (LMAGLLIMSLSMMPVGMVSGL). Topologically, residues 298–299 (QQ) are periplasmic. The chain crosses the membrane as a helical span at residues 300–320 (LFTLICLFYIGSIIAEPARET). The Cytoplasmic portion of the chain corresponds to 321-339 (LSASLADARARGSYMGFSR). The chain crosses the membrane as a helical span at residues 340–360 (LGLAIGGAIGYIGGGWLFDLG). The Periplasmic portion of the chain corresponds to 361–367 (KSAHQPE). Residues 368-388 (LPWMMLGIIGIFTFLALGWQF) traverse the membrane as a helical segment. Over 389–402 (SQKRAARRLLERDA) the chain is Cytoplasmic.

Belongs to the major facilitator superfamily. DHA1 family. MdtH (TC 2.A.1.2.21) subfamily.

It is found in the cell inner membrane. In Shigella flexneri serotype 5b (strain 8401), this protein is Multidrug resistance protein MdtH.